The sequence spans 89 residues: Small ribosomal subunit protein uS15 (89 aa).

It belongs to the universal ribosomal protein uS15 family. In terms of assembly, part of the 30S ribosomal subunit. Forms a bridge to the 50S subunit in the 70S ribosome, contacting the 23S rRNA.

Its function is as follows. One of the primary rRNA binding proteins, it binds directly to 16S rRNA where it helps nucleate assembly of the platform of the 30S subunit by binding and bridging several RNA helices of the 16S rRNA. Functionally, forms an intersubunit bridge (bridge B4) with the 23S rRNA of the 50S subunit in the ribosome. The polypeptide is Small ribosomal subunit protein uS15 (Aeromonas hydrophila subsp. hydrophila (strain ATCC 7966 / DSM 30187 / BCRC 13018 / CCUG 14551 / JCM 1027 / KCTC 2358 / NCIMB 9240 / NCTC 8049)).